Here is a 375-residue protein sequence, read N- to C-terminus: Queuine tRNA-ribosyltransferase (375 aa).

Residue aspartate 90 is the Proton acceptor of the active site. Substrate contacts are provided by residues 90–94, aspartate 144, glutamine 190, and glycine 217; that span reads DSGGF. The RNA binding stretch occupies residues 248 to 254; it reads GIGTPHY. Aspartate 267 acts as the Nucleophile in catalysis. An RNA binding; important for wobble base 34 recognition region spans residues 272 to 276; it reads TRIAR. Zn(2+) contacts are provided by cysteine 305, cysteine 307, cysteine 310, and histidine 336.

This sequence belongs to the queuine tRNA-ribosyltransferase family. In terms of assembly, homodimer. Within each dimer, one monomer is responsible for RNA recognition and catalysis, while the other monomer binds to the replacement base PreQ1. It depends on Zn(2+) as a cofactor.

It carries out the reaction 7-aminomethyl-7-carbaguanine + guanosine(34) in tRNA = 7-aminomethyl-7-carbaguanosine(34) in tRNA + guanine. The protein operates within tRNA modification; tRNA-queuosine biosynthesis. Functionally, catalyzes the base-exchange of a guanine (G) residue with the queuine precursor 7-aminomethyl-7-deazaguanine (PreQ1) at position 34 (anticodon wobble position) in tRNAs with GU(N) anticodons (tRNA-Asp, -Asn, -His and -Tyr). Catalysis occurs through a double-displacement mechanism. The nucleophile active site attacks the C1' of nucleotide 34 to detach the guanine base from the RNA, forming a covalent enzyme-RNA intermediate. The proton acceptor active site deprotonates the incoming PreQ1, allowing a nucleophilic attack on the C1' of the ribose to form the product. After dissociation, two additional enzymatic reactions on the tRNA convert PreQ1 to queuine (Q), resulting in the hypermodified nucleoside queuosine (7-(((4,5-cis-dihydroxy-2-cyclopenten-1-yl)amino)methyl)-7-deazaguanosine). The sequence is that of Queuine tRNA-ribosyltransferase from Borrelia recurrentis (strain A1).